The sequence spans 1383 residues: Periaxin (1383 aa).

Ser-7 is modified (phosphoserine). The PDZ domain maps to 16–99 (LVEIIVETEA…YKVSFCLKRT (84 aa)). Residues 70 to 84 (VFFENFKYEDALRLL) carry the Nuclear export signal motif. Phosphoserine is present on residues Ser-133 and Ser-243. 46 consecutive repeat copies span residues 432-436 (GPEVK), 440-444 (GPEVK), 448-452 (VPEIK), 456-460 (APEAA), 461-465 (IPDVQ), 466-470 (LPEVQ), 474-478 (MSDMK), 482-486 (IPEMA), 487-491 (VPDVH), 492-496 (LPEVK), 497-501 (LPKVP), 502-506 (EMKVP), 507-511 (EMKLP), 515-519 (EMAVP), 523-527 (LPDIQ), 531-535 (VPEMK), 536-540 (LPDMK), 544-548 (VPEMA), 549-553 (VPDVH), 554-558 (LPDIQ), 562-566 (VPEMK), 567-571 (LPDMK), 575-579 (VPEMA), 580-584 (VPDVR), 585-589 (IPEVQ), 593-597 (VSEVK), 601-605 (IPDMA), 606-610 (VPDVR), 611-615 (LPELQ), 619-623 (MSEVK), 627-631 (IPDMA), 632-636 (VPDVR), 637-641 (LPEVQ), 645-649 (VSELK), 653-657 (VPEMT), 658-662 (MPDIR), 663-667 (LPEVQ), 671-675 (VPDIK), 676-680 (LPEIK), 684-688 (VPEMA), 689-693 (VPDVP), 694-698 (LPELQ), 699-703 (LPKVP), 705-709 (VPDVH), 713-717 (VPEMK), and 718-722 (LPKVP). Positions 432–722 (GPEVKAPKGP…VPEMKLPKVP (291 aa)) are 46 X 5 AA approximate tandem repeats of [LVMGIE]-[PSM]-[EDKA]-[LIVMA]-[AQKHPRT]; that may have a tripeptide spacer of [ALKD]-[IPV]-[KPH]. 9 positions are modified to phosphoserine: Ser-838, Ser-971, Ser-1020, Ser-1271, Ser-1275, Ser-1277, Ser-1285, Ser-1323, and Ser-1329. Residues 1251-1383 (KVKSPKLRLP…RIEGTQAAAI (133 aa)) form a disordered region. Positions 1267–1277 (SESASGEGSPS) are enriched in low complexity. Basic and acidic residues predominate over residues 1346-1355 (GSKDREEGGF). Ser-1361 carries the phosphoserine modification.

Belongs to the periaxin family. As to quaternary structure, homodimer (via PDZ domain). Interacts with SCN10A. Found in a complex with SCN10A. Interacts with DRP2. Identified in a dystroglycan complex that contains at least PRX, DRP2, UTRN, DMD and DAG1. Detected in a complex composed of at least EZR, AHNAK, PPL and PRX. Identified in a complex with EZR, AHNAK, BFSP1, BFSP2, ANK2, PLEC, VIM and spectrin. Post-translationally, the N-terminus is blocked. As to expression, detected in sciatic nerve and in trigeminal nerve Schwann cells. Detected in myelinating Schwann cells in sciatic nerve (at protein level).

It is found in the nucleus. Its subcellular location is the cytoplasm. The protein localises to the cell membrane. The protein resides in the cell junction. Its function is as follows. Scaffolding protein that functions as part of a dystroglycan complex in Schwann cells, and as part of EZR and AHNAK-containing complexes in eye lens fiber cells. Required for the maintenance of the peripheral myelin sheath that is essential for normal transmission of nerve impulses and normal perception of sensory stimuli. Required for normal transport of MBP mRNA from the perinuclear to the paranodal regions. Required for normal remyelination after nerve injury. Required for normal elongation of Schwann cells and normal length of the internodes between the nodes of Ranvier. The demyelinated nodes of Ranvier permit saltatory transmission of nerve impulses; shorter internodes cause slower transmission of nerve impulses. Required for the formation of appositions between the abaxonal surface of the myelin sheath and the Schwann cell plasma membrane; the Schwann cell cytoplasm is restricted to regions between these appositions. Required for the formation of Cajal bands and of Schmidt-Lanterman incisures that correspond to short, cytoplasm-filled regions on myelinated nerves. Recruits DRP2 to the Schwann cell plasma membrane. Required for normal protein composition of the eye lens fiber cell plasma membrane and normal eye lens fiber cell morphology. This Rattus norvegicus (Rat) protein is Periaxin (Prx).